We begin with the raw amino-acid sequence, 333 residues long: Holliday junction branch migration complex subunit RuvB (333 aa).

The large ATPase domain (RuvB-L) stretch occupies residues 1–182 (MDERLLSGES…FGVLSRLEYY (182 aa)). ATP-binding positions include L21, R22, G63, K66, T67, T68, 129–131 (EDF), R172, Y182, and R219. T67 serves as a coordination point for Mg(2+). Residues 183-253 (TVDQLSAIVE…ITQMALELLQ (71 aa)) form a small ATPAse domain (RuvB-S) region. Positions 256-333 (KLGLDHIDHK…EHFGMEIPKV (78 aa)) are head domain (RuvB-H). The DNA site is built by R311 and R316.

This sequence belongs to the RuvB family. In terms of assembly, homohexamer. Forms an RuvA(8)-RuvB(12)-Holliday junction (HJ) complex. HJ DNA is sandwiched between 2 RuvA tetramers; dsDNA enters through RuvA and exits via RuvB. An RuvB hexamer assembles on each DNA strand where it exits the tetramer. Each RuvB hexamer is contacted by two RuvA subunits (via domain III) on 2 adjacent RuvB subunits; this complex drives branch migration. In the full resolvosome a probable DNA-RuvA(4)-RuvB(12)-RuvC(2) complex forms which resolves the HJ.

Its subcellular location is the cytoplasm. The catalysed reaction is ATP + H2O = ADP + phosphate + H(+). Functionally, the RuvA-RuvB-RuvC complex processes Holliday junction (HJ) DNA during genetic recombination and DNA repair, while the RuvA-RuvB complex plays an important role in the rescue of blocked DNA replication forks via replication fork reversal (RFR). RuvA specifically binds to HJ cruciform DNA, conferring on it an open structure. The RuvB hexamer acts as an ATP-dependent pump, pulling dsDNA into and through the RuvAB complex. RuvB forms 2 homohexamers on either side of HJ DNA bound by 1 or 2 RuvA tetramers; 4 subunits per hexamer contact DNA at a time. Coordinated motions by a converter formed by DNA-disengaged RuvB subunits stimulates ATP hydrolysis and nucleotide exchange. Immobilization of the converter enables RuvB to convert the ATP-contained energy into a lever motion, pulling 2 nucleotides of DNA out of the RuvA tetramer per ATP hydrolyzed, thus driving DNA branch migration. The RuvB motors rotate together with the DNA substrate, which together with the progressing nucleotide cycle form the mechanistic basis for DNA recombination by continuous HJ branch migration. Branch migration allows RuvC to scan DNA until it finds its consensus sequence, where it cleaves and resolves cruciform DNA. The protein is Holliday junction branch migration complex subunit RuvB of Bacillus cereus (strain G9842).